The chain runs to 130 residues: Small ribosomal subunit protein uS11c (130 aa).

It belongs to the universal ribosomal protein uS11 family. In terms of assembly, part of the 30S ribosomal subunit.

Its subcellular location is the plastid. The protein resides in the chloroplast. The polypeptide is Small ribosomal subunit protein uS11c (Psilotum nudum (Whisk fern)).